The chain runs to 309 residues: Protoheme IX farnesyltransferase (309 aa).

9 helical membrane-spanning segments follow: residues 35–55, 64–84, 114–134, 135–155, 161–181, 187–207, 231–251, 253–273, and 289–309; these read IGIV…AFYF, LHLV…SCAI, VLWL…MTTV, TAAV…TLWT, INTV…WTAV, IVPL…FLAL, MTKR…FYLF, LGVP…LLGL, and FVYS…ATLW.

It belongs to the UbiA prenyltransferase family. Protoheme IX farnesyltransferase subfamily. In terms of assembly, interacts with CtaA.

Its subcellular location is the cell membrane. The catalysed reaction is heme b + (2E,6E)-farnesyl diphosphate + H2O = Fe(II)-heme o + diphosphate. It functions in the pathway porphyrin-containing compound metabolism; heme O biosynthesis; heme O from protoheme: step 1/1. In terms of biological role, converts heme B (protoheme IX) to heme O by substitution of the vinyl group on carbon 2 of heme B porphyrin ring with a hydroxyethyl farnesyl side group. In Geobacillus kaustophilus (strain HTA426), this protein is Protoheme IX farnesyltransferase.